Reading from the N-terminus, the 396-residue chain is Putative nickel insertion protein (396 aa).

Belongs to the LarC family.

This chain is Putative nickel insertion protein, found in Methanosarcina mazei (strain ATCC BAA-159 / DSM 3647 / Goe1 / Go1 / JCM 11833 / OCM 88) (Methanosarcina frisia).